The chain runs to 187 residues: Interferon beta (187 aa).

Positions 1 to 21 are cleaved as a signal peptide; sequence MTNKCLLQIALLLCFSTTALS. A Phosphotyrosine modification is found at tyrosine 24. Cysteine 52 and cysteine 162 are oxidised to a cystine. Asparagine 101 carries N-linked (GlcNAc...) asparagine glycosylation.

It belongs to the alpha/beta interferon family. Monomer.

The protein resides in the secreted. Functionally, type I interferon cytokine that plays a key role in the innate immune response to infection, developing tumors and other inflammatory stimuli. Signals via binding to high-affinity (IFNAR2) and low-affinity (IFNAR1) heterodimeric receptor, activating the canonical Jak-STAT signaling pathway resulting in transcriptional activation or repression of interferon-regulated genes that encode the effectors of the interferon response, such as antiviral proteins, regulators of cell proliferation and differentiation, and immunoregulatory proteins. Signals mostly via binding to a IFNAR1-IFNAR2 heterodimeric receptor, but can also function with IFNAR1 alone and independently of Jak-STAT pathways. Elicits a wide variety of responses, including antiviral and antibacterial activities, and can regulate the development of B-cells, myelopoiesis and lipopolysaccharide (LPS)-inducible production of tumor necrosis factor. Plays a role in neuronal homeostasis by regulating dopamine turnover and protecting dopaminergic neurons: acts by promoting neuronal autophagy and alpha-synuclein clearance, thereby preventing dopaminergic neuron loss. IFNB1 is more potent than interferon-alpha (IFN-alpha) in inducing the apoptotic and antiproliferative pathways required for control of tumor cell growth. The sequence is that of Interferon beta from Homo sapiens (Human).